The chain runs to 298 residues: MTEVVTALSEQARAKVNLTLRVIGRRVDGYHELESVVVFADCADGLTLAPGQDLSLDASGPRVTECGDNADNLVIKAARLLAELVPGLKTGGFSLDKQLPIAAGIGGGSADAAAALRLLARSNGIALDDPRLMEAAKRTGADVPVCVASASCIMGGIGEKLTPLPLPRLSAVMVNPRVGVPTKDVFAALGLKNGQLNVGVTDVVAAPAWPDRDAPLGEWIAALSAGVNDLEAPAKQVQPVVGEVIALLAACDGALLARMSGSGATCFAIFGSDAEAKAAAQAIQRAHPNWWVHAGTLS.

Lysine 15 is a catalytic residue. Residue 100–110 participates in ATP binding; sequence PIAAGIGGGSA. Aspartate 142 is a catalytic residue.

Belongs to the GHMP kinase family. IspE subfamily.

It catalyses the reaction 4-CDP-2-C-methyl-D-erythritol + ATP = 4-CDP-2-C-methyl-D-erythritol 2-phosphate + ADP + H(+). It functions in the pathway isoprenoid biosynthesis; isopentenyl diphosphate biosynthesis via DXP pathway; isopentenyl diphosphate from 1-deoxy-D-xylulose 5-phosphate: step 3/6. Its function is as follows. Catalyzes the phosphorylation of the position 2 hydroxy group of 4-diphosphocytidyl-2C-methyl-D-erythritol. This chain is 4-diphosphocytidyl-2-C-methyl-D-erythritol kinase, found in Rhodopseudomonas palustris (strain BisA53).